The following is a 542-amino-acid chain: uncharacterized protein (542 aa).

At 1 to 78 the chain is on the extracellular side; the sequence is MSVQKEEYDI…EEKKLVRKMD (78 aa). A helical transmembrane segment spans residues 79–99; sequence LKIFLWVFIMFAFLDLIRKNI. The Cytoplasmic segment spans residues 100-119; the sequence is ARAVSDNFIVDLKMNTNDYN. The helical transmembrane segment at 120–140 threads the bilayer; it reads LGQTVYLVIFLASELPGNLLS. Residues 141–147 are Extracellular-facing; that stretch reads KRFGPER. Residues 148–168 form a helical membrane-spanning segment; the sequence is VIPVQIVLWSVICITQAGLKN. The Cytoplasmic portion of the chain corresponds to 169-176; it reads RGQFIATR. Residues 177 to 197 form a helical membrane-spanning segment; the sequence is CLLGMVQGGFIPDNILYLSYY. Residues 198–208 are Extracellular-facing; the sequence is YTGAELTFRLS. A helical membrane pass occupies residues 209-229; sequence FFWCAIPLFQILGSLLASGII. At 230 to 241 the chain is on the cytoplasmic side; that stretch reads EMRGIHNLAGWQ. The chain crosses the membrane as a helical span at residues 242-262; sequence YLFIIEGFLSLSVGVASFYLM. Residues 263-326 are Extracellular-facing; it reads RRGPTQTGES…TLTEFDLWPL (64 aa). Residues 327–347 traverse the membrane as a helical segment; sequence FIQGITAFISLQTVGSYLSLI. Over 348–359 the chain is Cytoplasmic; the sequence is LKSLNYSTFLSN. A helical membrane pass occupies residues 360–380; sequence ILAIPGQALLLINLPLAALLS. Residues 381-387 lie on the Extracellular side of the membrane; that stretch reads RKLKEKS. Residues 388–408 form a helical membrane-spanning segment; it reads LCVGIANVWVLPFIVSLVALP. The Cytoplasmic portion of the chain corresponds to 409 to 416; the sequence is TDTNPWIK. Residues 417–437 traverse the membrane as a helical segment; the sequence is YILLTGILGLPYTHSILAGWV. Topologically, residues 438 to 482 are extracellular; the sequence is SEISNSVRSRTVGTALYNMSAQVGAIIASNMYRNDDKPYYTRGNK. The helical transmembrane segment at 483 to 503 threads the bilayer; that stretch reads ILLGFTCFNICMAVATKFYYI. The Cytoplasmic segment spans residues 504-542; that stretch reads SRNKYKDRKWNSMTKEEQINYLDTTKDKGMKRLDYRFIH.

This sequence belongs to the major facilitator superfamily. Allantoate permease family.

Its subcellular location is the membrane. This is an uncharacterized protein from Saccharomyces cerevisiae (strain ATCC 204508 / S288c) (Baker's yeast).